We begin with the raw amino-acid sequence, 367 residues long: TATA-box-binding protein-like (367 aa).

The tract at residues 1-26 (MKKQSKTHKVDYKYYNSGSKTSRNRN) is disordered. Residues 16–26 (NSGSKTSRNRN) show a composition bias toward polar residues.

Belongs to the TBP family.

This chain is TATA-box-binding protein-like, found in Acanthamoeba polyphaga (Amoeba).